Here is a 496-residue protein sequence, read N- to C-terminus: Cytochrome P450 3A56 (496 aa).

C441 contributes to the heme binding site.

The protein belongs to the cytochrome P450 family. Heme is required as a cofactor. In terms of tissue distribution, highly expressed in liver and intestine. Moderate expression in gill and spleen. Low expression in kidney, brain and heart.

It is found in the endoplasmic reticulum membrane. Its subcellular location is the microsome membrane. The enzyme catalyses an organic molecule + reduced [NADPH--hemoprotein reductase] + O2 = an alcohol + oxidized [NADPH--hemoprotein reductase] + H2O + H(+). Its function is as follows. Putative steroid 6-beta-hydroxylase. The sequence is that of Cytochrome P450 3A56 (cyp3a56) from Fundulus heteroclitus (Killifish).